A 201-amino-acid chain; its full sequence is Thymidylate kinase (201 aa).

Position 7–14 (7–14 (GGEGSGKT)) interacts with ATP.

Belongs to the thymidylate kinase family.

The enzyme catalyses dTMP + ATP = dTDP + ADP. Functionally, phosphorylation of dTMP to form dTDP in both de novo and salvage pathways of dTTP synthesis. This chain is Thymidylate kinase, found in Acholeplasma laidlawii (strain PG-8A).